A 4763-amino-acid polypeptide reads, in one-letter code: Nonribosomal peptide synthetase sidC (4763 aa).

The tract at residues Met-1–Ser-24 is disordered. Over residues Pro-15–Ser-24 the composition is skewed to polar residues. Residues Ser-296–Ile-815 are adenylation 1. The 78-residue stretch at Glu-853 to Lys-930 folds into the Carrier 1 domain. Ser-890 is modified (O-(pantetheine 4'-phosphoryl)serine). The tract at residues Thr-1003–Pro-1396 is condensation 1. The tract at residues Gly-1398–Ala-1951 is adenylation 2. In terms of domain architecture, Carrier 2 spans Leu-1979–Ser-2055. At Ser-2016 the chain carries O-(pantetheine 4'-phosphoryl)serine. The segment at Thr-2092 to Met-2423 is condensation 2. Residues Glu-2556 to Leu-3070 form an adenylation 3 region. Positions Arg-3099–Thr-3175 constitute a Carrier 3 domain. An O-(pantetheine 4'-phosphoryl)serine modification is found at Ser-3136. The condensation 3 stretch occupies residues Pro-3217–Leu-3626. Positions Ser-3647 to Ser-3720 constitute a Carrier 4 domain. At Ser-3681 the chain carries O-(pantetheine 4'-phosphoryl)serine. Residues Thr-3761–Gln-4093 are condensation 4. Residues Pro-4204–Val-4277 enclose the Carrier 5 domain. At Ser-4238 the chain carries O-(pantetheine 4'-phosphoryl)serine. The tract at residues Glu-4344–Phe-4593 is condensation 5.

This sequence belongs to the NRP synthetase family.

Its pathway is siderophore biosynthesis. Nonribosomal peptide synthase; part of the siderophore biosynthetic pathway. Aspergillus fumigatus produces four types of siderophores, low-molecular-mass iron chelators, including excreted fusarinine C (FsC) and triacetylfusarinine C (TAFC) for iron uptake; and intacellular ferricrocin (FC) for hyphal and hydroxyferricrocin (HFC) for conidial iron distribution and storage. TAFC consists of three N(2)-acetyl-N(5)-anhydromevalonyl-N(5)-hydroxyornithine residues cyclically linked by ester bonds; FC is a cyclic hexapeptide with the structure Gly-Ser-Gly-(N(5)-acetyl-N(5)-hydroxyornithine)x3. The biosynthesis of all four siderophores depends on the hydroxylation of ornithine, catalyzed by the monooxygenase sidA. Subsequently, the pathways for biosynthesis of extra- and intracellular siderophores split. For biosynthesis of extracellular siderophores, the transacylase sidF transfers anhydromevalonyl to N(5)-hydroxyornithine. The required anhydromevalonyl-CoA moiety is derived from mevalonate by CoA ligation and dehydration catalyzed by sidI and sidH respectively. The acetylation of N(5)-hydroxyornithine for FC biosynthesis involves the constitutively expressed sidL. FC is hydroxylated to HFC by an as yet uncharacterized enzyme during conidiation. Assembly of fusarinine C (FsC) and FC is catalyzed by two different nonribosomal peptide synthetases (NRPS), sidD and sidC respectively. Subsequently, sidG catalyzes N2-acetylation of FsC for forming TAFC. Both extra- and intracellular siderophores are crucial for growth during iron limitation and virulence. The chain is Nonribosomal peptide synthetase sidC from Aspergillus fumigatus (strain ATCC MYA-4609 / CBS 101355 / FGSC A1100 / Af293) (Neosartorya fumigata).